The following is a 42-amino-acid chain: Photosystem I reaction center subunit IX (42 aa).

A helical membrane pass occupies residues 8 to 28 (YLSTAPVIGVLWMTFTAGFII).

This sequence belongs to the PsaJ family.

The protein resides in the plastid. The protein localises to the chloroplast thylakoid membrane. Functionally, may help in the organization of the PsaE and PsaF subunits. This is Photosystem I reaction center subunit IX from Pyropia yezoensis (Susabi-nori).